The primary structure comprises 146 residues: Transcriptional regulator MraZ (146 aa).

SpoVT-AbrB domains lie at 7-54 (HVTN…GPEL) and 83-126 (GVYV…DPQA).

Belongs to the MraZ family. In terms of assembly, forms oligomers.

It localises to the cytoplasm. The protein localises to the nucleoid. The protein is Transcriptional regulator MraZ of Rhizobium meliloti (strain 1021) (Ensifer meliloti).